A 136-amino-acid chain; its full sequence is Small ribosomal subunit protein uS8 (136 aa).

This sequence belongs to the universal ribosomal protein uS8 family. Part of the 30S ribosomal subunit. Contacts proteins S5 and S12.

In terms of biological role, one of the primary rRNA binding proteins, it binds directly to 16S rRNA central domain where it helps coordinate assembly of the platform of the 30S subunit. In Frankia alni (strain DSM 45986 / CECT 9034 / ACN14a), this protein is Small ribosomal subunit protein uS8.